The primary structure comprises 385 residues: 1-deoxy-D-xylulose 5-phosphate reductoisomerase (385 aa).

The NADPH site is built by serine 10, glycine 11, serine 12, isoleucine 13, glycine 36, asparagine 38, and asparagine 124. Lysine 125 contributes to the 1-deoxy-D-xylulose 5-phosphate binding site. An NADPH-binding site is contributed by glutamate 126. Residue aspartate 150 coordinates Mn(2+). Residues serine 151, glutamate 152, serine 176, and histidine 198 each contribute to the 1-deoxy-D-xylulose 5-phosphate site. Glutamate 152 is a Mn(2+) binding site. Glycine 204 provides a ligand contact to NADPH. 1-deoxy-D-xylulose 5-phosphate-binding residues include serine 211, asparagine 216, lysine 217, and glutamate 220. Residue glutamate 220 coordinates Mn(2+).

Belongs to the DXR family. It depends on Mg(2+) as a cofactor. Mn(2+) is required as a cofactor.

The enzyme catalyses 2-C-methyl-D-erythritol 4-phosphate + NADP(+) = 1-deoxy-D-xylulose 5-phosphate + NADPH + H(+). The protein operates within isoprenoid biosynthesis; isopentenyl diphosphate biosynthesis via DXP pathway; isopentenyl diphosphate from 1-deoxy-D-xylulose 5-phosphate: step 1/6. Functionally, catalyzes the NADPH-dependent rearrangement and reduction of 1-deoxy-D-xylulose-5-phosphate (DXP) to 2-C-methyl-D-erythritol 4-phosphate (MEP). This Endomicrobium trichonymphae protein is 1-deoxy-D-xylulose 5-phosphate reductoisomerase.